The sequence spans 192 residues: Orotate phosphoribosyltransferase (192 aa).

116–124 (EDIVTTGLS) serves as a coordination point for 5-phospho-alpha-D-ribose 1-diphosphate. Residues T120 and R148 each coordinate orotate.

This sequence belongs to the purine/pyrimidine phosphoribosyltransferase family. PyrE subfamily. In terms of assembly, homodimer. The cofactor is Mg(2+).

It catalyses the reaction orotidine 5'-phosphate + diphosphate = orotate + 5-phospho-alpha-D-ribose 1-diphosphate. It participates in pyrimidine metabolism; UMP biosynthesis via de novo pathway; UMP from orotate: step 1/2. Functionally, catalyzes the transfer of a ribosyl phosphate group from 5-phosphoribose 1-diphosphate to orotate, leading to the formation of orotidine monophosphate (OMP). This chain is Orotate phosphoribosyltransferase, found in Bartonella tribocorum (strain CIP 105476 / IBS 506).